A 343-amino-acid polypeptide reads, in one-letter code: MMISDLPEDMVEEILSRVSIISLGALRWNDLSKARVICKAEARQQFAGFMIKGSKVCSMRFDLHGIQNNNVEVVEPSIKQIAKFNHVEISQVFHCDGLLLMMSKEVSNTRLVVWNPYLGKIWSIQHRSAYHSENRYTLGYDNNRKPQNLEVAYHSIKGITYLFNGGEKIGEGPTGCLLCFDFTRERFGPSLPLPFHVAHLYTEQLAVLLHNWGAFAMEIWVTTNIEPNAVLMEQLLKNYLLYTSDFIGSFFIDQEKKHAVIFDSSLSCGSVACIIGETGNLRTVDLGVAAVPYRQLPVCSYAPSLEQINQGQELPLIGLTQIFMEQHKYWVSTFLDNLITKYG.

Positions 1-46 constitute an F-box domain; that stretch reads MMISDLPEDMVEEILSRVSIISLGALRWNDLSKARVICKAEARQQF.

This is Probable F-box protein At1g67455 from Arabidopsis thaliana (Mouse-ear cress).